The chain runs to 307 residues: MLPFTLQQLRILKAVATEKNFTKAAELLYLSQPSLSKQIKTLEKNLDILLVNRENNKISLTENGKIFLQYSERILALCEESCRALIDLKNGERGSLTVGASQTIGTYLMPRVLALFAQNYPQIDLKVQVNSTRIVAKNILNREIDIAVVGGEIPLDLKKNLTVEKFVEDEFSLIIPKSHPFANKKIVTKEDLYHLNFISLNSNSTIRKFIDNILIQNQIDTKQLKIIMQLNSIEAIKTAVSLGQGAAFVSSAAIEKEIELKTIEILKIENIRITRTLSIISNSESYKSKAFEFFSNELKKLKNEIEN.

Positions 4–61 (FTLQQLRILKAVATEKNFTKAAELLYLSQPSLSKQIKTLEKNLDILLVNRENNKISLT) constitute an HTH lysR-type domain. The H-T-H motif DNA-binding region spans 21 to 40 (FTKAAELLYLSQPSLSKQIK).

This sequence belongs to the LysR transcriptional regulatory family.

It localises to the plastid. It is found in the chloroplast. Trans-acting transcriptional regulator of RuBisCO genes (rbcL and rbcS) expression. In Phaeodactylum tricornutum (strain CCAP 1055/1), this protein is Probable RuBisCO transcriptional regulator (rbcR).